Consider the following 316-residue polypeptide: dTDP-4-dehydro-6-deoxyglucose reductase (316 aa).

Phenylalanine 16–isoleucine 17 provides a ligand contact to NAD(+). The active-site Proton acceptor is the tyrosine 151. Lysine 155 is a binding site for NAD(+).

The protein belongs to the NAD(P)-dependent epimerase/dehydratase family.

The catalysed reaction is dTDP-alpha-D-fucose + NAD(+) = dTDP-4-dehydro-6-deoxy-alpha-D-glucose + NADH + H(+). It carries out the reaction dTDP-alpha-D-fucose + NADP(+) = dTDP-4-dehydro-6-deoxy-alpha-D-glucose + NADPH + H(+). It functions in the pathway bacterial outer membrane biogenesis; LPS O-antigen biosynthesis. Its activity is regulated as follows. Inhibited by Cu(2+), while other divalent cations such as Ca(2+), Co(2+), Fe(2+), Mn(2+) and Mg(2+) have no obvious effects on enzyme activity. Its function is as follows. Catalyzes the stereospecific reduction of the C-4 keto group of dTDP-4-dehydro-6-deoxy-D-glucose, leading to dTDP-D-fucopyranose. This is a step in the biosynthesis of D-fucofuranose, a component of E.coli O52 O antigen. Is more efficient using NADH than NADPH as cosubstrate. The chain is dTDP-4-dehydro-6-deoxyglucose reductase (fcf1) from Escherichia coli.